Here is a 319-residue protein sequence, read N- to C-terminus: Curved DNA-binding protein (319 aa).

The 65-residue stretch at 5–69 (DYYKILGVEP…QKRAEFDEIR (65 aa)) folds into the J domain.

Its subcellular location is the cytoplasm. The protein localises to the nucleoid. Functionally, DNA-binding protein that preferentially recognizes a curved DNA sequence. It is probably a functional analog of DnaJ; displays overlapping activities with DnaJ, but functions under different conditions, probably acting as a molecular chaperone in an adaptive response to environmental stresses other than heat shock. Lacks autonomous chaperone activity; binds native substrates and targets them for recognition by DnaK. Its activity is inhibited by the binding of CbpM. This chain is Curved DNA-binding protein, found in Pseudomonas putida (strain ATCC 47054 / DSM 6125 / CFBP 8728 / NCIMB 11950 / KT2440).